The primary structure comprises 129 residues: Glutaredoxin-like protein ECU08_1380 (129 aa).

Positions 26 to 126 (EADYGEMVRR…PLLTQNREPV (101 aa)) constitute a Glutaredoxin domain.

This sequence belongs to the glutaredoxin family.

Its subcellular location is the cytoplasm. Has a glutathione-disulfide oxidoreductase activity in the presence of NADPH and glutathione reductase. Reduces low molecular weight disulfides and proteins. The sequence is that of Glutaredoxin-like protein ECU08_1380 from Encephalitozoon cuniculi (strain GB-M1) (Microsporidian parasite).